The chain runs to 346 residues: Eukaryotic translation initiation factor 3 subunit I (346 aa).

WD repeat units lie at residues 8–47 (GHER…RLGT), 50–89 (GHNG…IAHS), 150–189 (EGCA…CLEI), 192–233 (LHKQ…KTYE), and 289–328 (DHFG…FDFK).

It belongs to the eIF-3 subunit I family. In terms of assembly, component of the eukaryotic translation initiation factor 3 (eIF-3) complex.

Its subcellular location is the cytoplasm. In terms of biological role, component of the eukaryotic translation initiation factor 3 (eIF-3) complex, which is involved in protein synthesis of a specialized repertoire of mRNAs and, together with other initiation factors, stimulates binding of mRNA and methionyl-tRNAi to the 40S ribosome. The eIF-3 complex specifically targets and initiates translation of a subset of mRNAs involved in cell proliferation. In Eremothecium gossypii (strain ATCC 10895 / CBS 109.51 / FGSC 9923 / NRRL Y-1056) (Yeast), this protein is Eukaryotic translation initiation factor 3 subunit I.